A 252-amino-acid chain; its full sequence is MGQKTNPNGLRLGIIRTWESQWYVNDKEIPNLIKEDFLIRKLINNFAKKSAISQIDIERLKEKNKNRITIFVHTAKPGVIIGKDGDTRNKLVVKLKELTQKEVNLNVLEVKNSDKIALLIAQNMAEQLENRMFFRRVQKMAIQKALKAGAKGVKTLISGRLGGAEIARSEGHAEGRVPLHTLRADIDYAAVEAHTTYGVLGIKVWIFHGEVLPGQTILDTRKPFASQSSNTPNRRPRNFKGGNNNHVNAKKN.

One can recognise a KH type-2 domain in the interval 39–111; the sequence is IRKLINNFAK…EVNLNVLEVK (73 aa). The disordered stretch occupies residues 222–252; it reads KPFASQSSNTPNRRPRNFKGGNNNHVNAKKN. The segment covering 241 to 252 has biased composition (polar residues); sequence GGNNNHVNAKKN.

Belongs to the universal ribosomal protein uS3 family. In terms of assembly, part of the 30S ribosomal subunit. Forms a tight complex with proteins S10 and S14.

In terms of biological role, binds the lower part of the 30S subunit head. Binds mRNA in the 70S ribosome, positioning it for translation. In Phytoplasma sp. (strain STRAWB2), this protein is Small ribosomal subunit protein uS3.